The primary structure comprises 209 residues: Orotate phosphoribosyltransferase (209 aa).

5-phospho-alpha-D-ribose 1-diphosphate-binding positions include arginine 96, lysine 100, histidine 102, and 122 to 130 (EDLISTGGS). Serine 126 contributes to the orotate binding site.

Belongs to the purine/pyrimidine phosphoribosyltransferase family. PyrE subfamily. Homodimer. The cofactor is Mg(2+).

It catalyses the reaction orotidine 5'-phosphate + diphosphate = orotate + 5-phospho-alpha-D-ribose 1-diphosphate. The protein operates within pyrimidine metabolism; UMP biosynthesis via de novo pathway; UMP from orotate: step 1/2. Its function is as follows. Catalyzes the transfer of a ribosyl phosphate group from 5-phosphoribose 1-diphosphate to orotate, leading to the formation of orotidine monophosphate (OMP). The sequence is that of Orotate phosphoribosyltransferase from Streptococcus pyogenes serotype M1.